The primary structure comprises 228 residues: 3,4-dihydroxy-2-butanone 4-phosphate synthase (228 aa).

Residues 37 to 38, Asp-42, 150 to 154, and Glu-174 contribute to the D-ribulose 5-phosphate site; these read RE and RPGHT. Residue Glu-38 coordinates Mg(2+). His-153 contributes to the Mg(2+) binding site.

This sequence belongs to the DHBP synthase family. In terms of assembly, homodimer. Mg(2+) serves as cofactor. Requires Mn(2+) as cofactor.

It catalyses the reaction D-ribulose 5-phosphate = (2S)-2-hydroxy-3-oxobutyl phosphate + formate + H(+). It participates in cofactor biosynthesis; riboflavin biosynthesis; 2-hydroxy-3-oxobutyl phosphate from D-ribulose 5-phosphate: step 1/1. Its function is as follows. Catalyzes the conversion of D-ribulose 5-phosphate to formate and 3,4-dihydroxy-2-butanone 4-phosphate. In Chloroherpeton thalassium (strain ATCC 35110 / GB-78), this protein is 3,4-dihydroxy-2-butanone 4-phosphate synthase.